The chain runs to 394 residues: Elongation factor Tu 2 (394 aa).

A tr-type G domain is found at 10–204 (KPHVNVGTIG…ALDSYIPEPE (195 aa)). The segment at 19 to 26 (GHVDHGKT) is G1. 19-26 (GHVDHGKT) is a GTP binding site. Residue threonine 26 coordinates Mg(2+). The segment at 60–64 (GITIN) is G2. The G3 stretch occupies residues 81 to 84 (DCPG). Residues 81–85 (DCPGH) and 136–139 (NKCD) contribute to the GTP site. Residues 136–139 (NKCD) are G4. The tract at residues 174-176 (SAL) is G5.

This sequence belongs to the TRAFAC class translation factor GTPase superfamily. Classic translation factor GTPase family. EF-Tu/EF-1A subfamily. In terms of assembly, monomer.

Its subcellular location is the cytoplasm. It catalyses the reaction GTP + H2O = GDP + phosphate + H(+). Its function is as follows. GTP hydrolase that promotes the GTP-dependent binding of aminoacyl-tRNA to the A-site of ribosomes during protein biosynthesis. The protein is Elongation factor Tu 2 of Shewanella loihica (strain ATCC BAA-1088 / PV-4).